Reading from the N-terminus, the 334-residue chain is Protein translocase subunit SecF (334 aa).

The next 6 helical transmembrane spans lie at 18–38 (VAAG…AVTG), 144–164 (GAAM…AIRF), 168–190 (FGLA…IKIF), 195–217 (SLTV…IIIF), 258–278 (ATLA…WVMA), and 279–299 (FGVV…LLWI).

The protein belongs to the SecD/SecF family. SecF subfamily. As to quaternary structure, forms a complex with SecD. Part of the essential Sec protein translocation apparatus which comprises SecA, SecYEG and auxiliary proteins SecDF. Other proteins may also be involved.

The protein resides in the cell inner membrane. Part of the Sec protein translocase complex. Interacts with the SecYEG preprotein conducting channel. SecDF uses the proton motive force (PMF) to complete protein translocation after the ATP-dependent function of SecA. The sequence is that of Protein translocase subunit SecF from Gemmatimonas aurantiaca (strain DSM 14586 / JCM 11422 / NBRC 100505 / T-27).